A 486-amino-acid polypeptide reads, in one-letter code: Histone acetyltransferase type B catalytic subunit DDB_G0274269 (486 aa).

A coiled-coil region spans residues 27–69; that stretch reads DIEELKNKDNKENKDKENKAHIKDEGEEEEQKEKKEEEEKEDD. Residues 33-50 show a composition bias toward basic and acidic residues; sequence NKDNKENKDKENKAHIKD. Residues 33 to 78 are disordered; it reads NKDNKENKDKENKAHIKDEGEEEEQKEKKEEEEKEDDGGPISFHPT. In terms of domain architecture, N-acetyltransferase spans 189-386; that stretch reads VVFRYHEKLQ…YRISIKKRLY (198 aa). Residues 260–262 and 267–273 contribute to the acetyl-CoA site; these read YLI and QRMGHGK. The Proton donor/acceptor role is filled by E299. The stretch at 392–481 forms a coiled coil; that stretch reads DSEQIEKIKQ…KNYHKTLSSL (90 aa).

The protein belongs to the HAT1 family.

It catalyses the reaction L-lysyl-[protein] + acetyl-CoA = N(6)-acetyl-L-lysyl-[protein] + CoA + H(+). This is Histone acetyltransferase type B catalytic subunit DDB_G0274269 from Dictyostelium discoideum (Social amoeba).